The chain runs to 63 residues: Large ribosomal subunit protein bL35 (63 aa).

This sequence belongs to the bacterial ribosomal protein bL35 family.

The protein is Large ribosomal subunit protein bL35 of Campylobacter curvus (strain 525.92).